A 376-amino-acid polypeptide reads, in one-letter code: Ribosomal RNA large subunit methyltransferase G (376 aa).

Belongs to the methyltransferase superfamily. RlmG family.

It is found in the cytoplasm. It carries out the reaction guanosine(1835) in 23S rRNA + S-adenosyl-L-methionine = N(2)-methylguanosine(1835) in 23S rRNA + S-adenosyl-L-homocysteine + H(+). Its function is as follows. Specifically methylates the guanine in position 1835 (m2G1835) of 23S rRNA. The sequence is that of Ribosomal RNA large subunit methyltransferase G from Vibrio cholerae serotype O1 (strain ATCC 39541 / Classical Ogawa 395 / O395).